We begin with the raw amino-acid sequence, 244 residues long: CTD nuclear envelope phosphatase 1 (244 aa).

The chain crosses the membrane as a helical span at residues 7-29 (LLGLRTFVAFAAKLWSFFIYLLR). An FCP1 homology domain is found at 57–224 (AQVKRKILVL…LNLLPMLDAL (168 aa)).

This sequence belongs to the dullard family. As to quaternary structure, interacts with CNEP1R1; the complex dephosphorylates LPIN1 and LPIN2. Muscle specific with lower expression in other metabolic tissues.

The protein localises to the endoplasmic reticulum membrane. It is found in the nucleus membrane. The enzyme catalyses O-phospho-L-seryl-[protein] + H2O = L-seryl-[protein] + phosphate. It catalyses the reaction O-phospho-L-threonyl-[protein] + H2O = L-threonyl-[protein] + phosphate. Serine/threonine protein phosphatase forming with CNEP1R1 an active phosphatase complex that dephosphorylates and may activate LPIN1 and LPIN2. LPIN1 and LPIN2 are phosphatidate phosphatases that catalyze the conversion of phosphatidic acid to diacylglycerol and control the metabolism of fatty acids at different levels. May indirectly modulate the lipid composition of nuclear and/or endoplasmic reticulum membranes and be required for proper nuclear membrane morphology and/or dynamics. May also indirectly regulate the production of lipid droplets and triacylglycerol. May antagonize BMP signaling. This is CTD nuclear envelope phosphatase 1 (Ctdnep1) from Mus musculus (Mouse).